Here is a 956-residue protein sequence, read N- to C-terminus: MMSSLFVEGMLLKSADESCLPAKGKQRRTGDLRRLNHHRQPAFVRWICRRKLSGVSRIEFHSGGLTPPRAVLNPVSPPVTTTKKRVFTFGKGRSEGNKDMKSLLGGKGANLAEMASIGLSVPPGLTISTEACEEYQQNGKKLPPGLWDEILEGLRYVQKEMSASLGDPSKPLLLSVRSGAAISMPGMMDTVLNLGLNDEVVAGLAGKSGARFAYDSYRRFLDMFGNVVMGIPHSLFDEKLEEMKAEKGVHLDTDLTAADLKDLVEQYKNVYVEAKGEKFPTDPKKQLELAVNAVFDSWDSPRANKYRSINQITGLKGTAVNIQCMVFGNMGNTSGTGVLFTRNPSTGEKKLYGEFLVNAQGEDVVAGIRTPEDLATMETCMPEAYRELVENCKILERHYKDMMDIEFTVQENRLWMLQCRTGKRTGKGAVRIAVDMVNEGLIDTRTAIKRVETQHLDQLLHPQFENPSAYKSHVVATGLPASPGAAVGQVVFSAEDAETWHAQGKSAILVRTETSPEDVGGMHAAAGILTARGGMTSHAAVVARGWGKCCVSGCADIRVNDDMKVLTIGDRVIKEGDWLSLNGSTGEVILGKQLLAPPAMSNDLETFMSWADQVRRLKVMANADTPNDALTARNNGAQGIGLCRTEHMFFASDERIKAVRKMIMAVTPEQRKAALDLLLPYQRSDFEGIFRAMDGLPVTIRLLDPPLHEFLPEGDLEHIVNELAVDTGMSEDEIYSKIEKLSEVNPMLGFRGCRLGISYPELTEMQVRAIFQAAVSMNNQGVTVIPEIMVPLVGTPQELRHQIGVIRGVAANVFAEMGLTMDYKVGTMIEIPRAALIAEEIAKEAEFFSFGTNDLTQMTFGYSRDDVGKFLQIYLSQGILQHDPFEVLDQKGVGQLIKMATEKGRAANPNLKVGICGEHGGEPSSVAFFDGVGLDYVSCSPFRVPIARLAAAQVVV.

A chloroplast-targeting transit peptide spans 1–79 (MMSSLFVEGM…AVLNPVSPPV (79 aa)). Thr-536 carries the post-translational modification Phosphothreonine; by PDRP1. His-538 functions as the Tele-phosphohistidine intermediate in the catalytic mechanism. The substrate site is built by Arg-644, Arg-701, Glu-830, Gly-851, Thr-852, Asn-853, and Asp-854. Glu-830 contacts Mg(2+). Asp-854 is a Mg(2+) binding site. The active-site Proton donor is Cys-916.

It belongs to the PEP-utilizing enzyme family. In terms of assembly, homotetramer. Requires Mg(2+) as cofactor. Phosphorylation of Thr-536 in the dark inactivates the enzyme. Dephosphorylation upon light stimulation reactivates the enzyme.

It localises to the plastid. The protein localises to the chloroplast. The enzyme catalyses pyruvate + phosphate + ATP = phosphoenolpyruvate + AMP + diphosphate + H(+). Its activity is regulated as follows. Activated by light-induced dephosphorylation. Inhibited by dark-induced phosphorylation. Both reactions are catalyzed by PDRP1. Functionally, formation of phosphoenolpyruvate. The protein is Pyruvate, phosphate dikinase, chloroplastic (PPDK) of Flaveria pringlei.